We begin with the raw amino-acid sequence, 543 residues long: Hydroxylamine reductase (543 aa).

Cysteine 5, cysteine 8, cysteine 17, and cysteine 23 together coordinate [4Fe-4S] cluster. Hybrid [4Fe-2O-2S] cluster is bound by residues histidine 250, glutamate 274, cysteine 318, cysteine 410, cysteine 438, cysteine 463, glutamate 498, and lysine 500. Cysteine 410 is subject to Cysteine persulfide.

Belongs to the HCP family. [4Fe-4S] cluster serves as cofactor. It depends on hybrid [4Fe-2O-2S] cluster as a cofactor.

The protein localises to the cytoplasm. It catalyses the reaction A + NH4(+) + H2O = hydroxylamine + AH2 + H(+). In terms of biological role, catalyzes the reduction of hydroxylamine to form NH(3) and H(2)O. This is Hydroxylamine reductase from Petrotoga mobilis (strain DSM 10674 / SJ95).